Here is a 436-residue protein sequence, read N- to C-terminus: 3-ketoacyl-CoA thiolase (436 aa).

Catalysis depends on Cys99, which acts as the Acyl-thioester intermediate. Active-site proton acceptor residues include His392 and Cys422.

It belongs to the thiolase-like superfamily. Thiolase family. In terms of assembly, heterotetramer of two alpha chains (FadJ) and two beta chains (FadI).

It localises to the cytoplasm. It catalyses the reaction an acyl-CoA + acetyl-CoA = a 3-oxoacyl-CoA + CoA. The protein operates within lipid metabolism; fatty acid beta-oxidation. In terms of biological role, catalyzes the final step of fatty acid oxidation in which acetyl-CoA is released and the CoA ester of a fatty acid two carbons shorter is formed. The protein is 3-ketoacyl-CoA thiolase of Pseudoalteromonas atlantica (strain T6c / ATCC BAA-1087).